A 381-amino-acid polypeptide reads, in one-letter code: Flap endonuclease 1 (381 aa).

The N-domain stretch occupies residues 1 to 105 (MGIKGLNSII…HELDKRTSRR (105 aa)). Asp34 contributes to the Mg(2+) binding site. 2 residues coordinate DNA: Arg47 and Arg71. 5 residues coordinate Mg(2+): Asp87, Glu156, Glu158, Asp177, and Asp179. Residues 120 to 251 (EKMKHERRLV…VTALKLMKEH (132 aa)) form an I-domain region. DNA is bound at residue Glu156. The DNA site is built by Gly229 and Asp231. Position 231 (Asp231) interacts with Mg(2+). The interaction with PCNA stretch occupies residues 338–346 (VQGRLDGFF).

Belongs to the XPG/RAD2 endonuclease family. FEN1 subfamily. As to quaternary structure, interacts with PCNA. Three molecules of FEN1 bind to one PCNA trimer with each molecule binding to one PCNA monomer. PCNA stimulates the nuclease activity without altering cleavage specificity. It depends on Mg(2+) as a cofactor. Phosphorylated. Phosphorylation upon DNA damage induces relocalization to the nuclear plasma.

The protein resides in the nucleus. Its subcellular location is the nucleolus. It is found in the nucleoplasm. It localises to the mitochondrion. Its function is as follows. Structure-specific nuclease with 5'-flap endonuclease and 5'-3' exonuclease activities involved in DNA replication and repair. During DNA replication, cleaves the 5'-overhanging flap structure that is generated by displacement synthesis when DNA polymerase encounters the 5'-end of a downstream Okazaki fragment. It enters the flap from the 5'-end and then tracks to cleave the flap base, leaving a nick for ligation. Also involved in the long patch base excision repair (LP-BER) pathway, by cleaving within the apurinic/apyrimidinic (AP) site-terminated flap. Acts as a genome stabilization factor that prevents flaps from equilibrating into structures that lead to duplications and deletions. Also possesses 5'-3' exonuclease activity on nicked or gapped double-stranded DNA, and exhibits RNase H activity. Also involved in replication and repair of rDNA and in repairing mitochondrial DNA. This is Flap endonuclease 1 from Candida glabrata (strain ATCC 2001 / BCRC 20586 / JCM 3761 / NBRC 0622 / NRRL Y-65 / CBS 138) (Yeast).